The sequence spans 390 residues: Homeobox protein Meis1 (390 aa).

The 85-residue stretch at 108 to 192 (GGDVCSSESF…IDLVIDDREG (85 aa)) folds into the MEIS N-terminal domain. Basic and acidic residues predominate over residues 190-202 (REGGSKSDSEDIT). The disordered stretch occupies residues 190–279 (REGGSKSDSE…KKRHKKRGIF (90 aa)). Polar residues predominate over residues 203 to 213 (RSANLTDQPSW). The segment at residues 272–334 (RHKKRGIFPK…NARRRIVQPM (63 aa)) is a DNA-binding region (homeobox; TALE-type). The interaction with DNA stretch occupies residues 299 to 329 (YPSEEQKKQLAQDTGLTILQVNNWFINARRR). The required for transcriptional activation stretch occupies residues 335–390 (IDQSNRAVSQGTPYNPDGQPMGGFVMDGQQHMGIRAPGPMSGMGMNMGMEGQWHYM).

It belongs to the TALE/MEIS homeobox family. Interacts with the N-terminal region of PBX1 to form a heterodimer which binds DNA including a cAMP-responsive sequence in CYP17. Also forms heterodimers with PBX2. Forms heterotrimers with PBX1 or PBX2 and a number of HOX proteins including HOXA9, HOXD4 and HOXD9 where it acts as a non-DNA-binding partner. Also forms heterotrimers with PBX1 and HOX proteins including HOXD9 and HOXD10 where PBX1 is the non-DNA-binding partner. Heterodimer with DLX3. Heterodimer with HOXB13. Expressed at low level in normal immunohepatopoietic tissues, including the fetal liver. Expressed in a subset of myeloid leukemia cell lines, with the highest expression seen in those with a megakaryocytic-erythroid phenotype. Also expressed at high levels in the cerebellum.

It localises to the nucleus. Acts as a transcriptional regulator of PAX6. Acts as a transcriptional activator of PF4 in complex with PBX1 or PBX2. Required for hematopoiesis, megakaryocyte lineage development and vascular patterning. May function as a cofactor for HOXA7 and HOXA9 in the induction of myeloid leukemias. In Homo sapiens (Human), this protein is Homeobox protein Meis1 (MEIS1).